A 357-amino-acid polypeptide reads, in one-letter code: Uroporphyrinogen decarboxylase (357 aa).

Substrate contacts are provided by residues 27–31 (RQAGR), Asp-77, Tyr-154, Thr-209, and His-327.

It belongs to the uroporphyrinogen decarboxylase family. As to quaternary structure, homodimer.

It localises to the cytoplasm. The catalysed reaction is uroporphyrinogen III + 4 H(+) = coproporphyrinogen III + 4 CO2. Its pathway is porphyrin-containing compound metabolism; protoporphyrin-IX biosynthesis; coproporphyrinogen-III from 5-aminolevulinate: step 4/4. Its function is as follows. Catalyzes the decarboxylation of four acetate groups of uroporphyrinogen-III to yield coproporphyrinogen-III. The sequence is that of Uroporphyrinogen decarboxylase from Nitrosococcus oceani (strain ATCC 19707 / BCRC 17464 / JCM 30415 / NCIMB 11848 / C-107).